A 718-amino-acid chain; its full sequence is Exostosin-2 (718 aa).

Residues methionine 1 to tyrosine 25 lie on the Cytoplasmic side of the membrane. Residues tyrosine 26 to tryptophan 46 traverse the membrane as a helical; Signal-anchor for type II membrane protein segment. At proline 47–leucine 718 the chain is on the lumenal side. 4 cysteine pairs are disulfide-bonded: cysteine 85/cysteine 90, cysteine 96/cysteine 151, cysteine 286/cysteine 300, and cysteine 318/cysteine 339. Residue asparagine 288 is glycosylated (N-linked (GlcNAc...) asparagine). 4 residues coordinate UDP: leucine 461, arginine 465, asparagine 490, and asparagine 517. 7 residues coordinate UDP-N-acetyl-alpha-D-glucosamine: arginine 465, asparagine 490, asparagine 517, arginine 522, aspartate 538, aspartate 539, and aspartate 540. UDP is bound by residues aspartate 538 and aspartate 539. Position 540 (aspartate 540) interacts with Mn(2+). Residues tyrosine 582 and serine 584 each coordinate a protein. A disulfide bond links cysteine 626 and cysteine 676. UDP-N-acetyl-alpha-D-glucosamine contacts are provided by glutamate 627 and aspartate 628. A glycan (N-linked (GlcNAc...) asparagine) is linked at asparagine 637. Residues lysine 651 and lysine 653 each coordinate a protein. Arginine 673 is a UDP-N-acetyl-alpha-D-glucosamine binding site.

The protein belongs to the glycosyltransferase 47 family. As to quaternary structure, part of the heparan sulfate polymerase, a dimeric complex composed of EXT1 and EXT2. Could also form homooligomeric complexes. Interacts with NDST1. Interacts with GALNT5. The cofactor is Mn(2+). In terms of processing, N-glycosylated at Asn-637. Post-translationally, a soluble form is generated by proteolytic processing. Expressed in heart, brain, spleen, lung, liver, skeletal muscle and testis. Heart shows a high expression.

It localises to the golgi apparatus membrane. The protein localises to the golgi apparatus. Its subcellular location is the cis-Golgi network membrane. It is found in the endoplasmic reticulum membrane. The protein resides in the secreted. It carries out the reaction 3-O-{[(1-&gt;4)-beta-D-GlcA-(1-&gt;4)-alpha-D-GlcNAc](n)-(1-&gt;4)-beta-D-GlcA-(1-&gt;3)-beta-D-Gal-(1-&gt;3)-beta-D-Gal-(1-&gt;4)-beta-D-Xyl}-L-seryl-[protein] + UDP-N-acetyl-alpha-D-glucosamine = 3-O-{alpha-D-GlcNAc-[(1-&gt;4)-beta-D-GlcA-(1-&gt;4)-alpha-D-GlcNAc](n)-(1-&gt;4)-beta-D-GlcA-(1-&gt;3)-beta-D-Gal-(1-&gt;3)-beta-D-Gal-(1-&gt;4)-beta-D-Xyl}-L-seryl-[protein] + UDP + H(+). It participates in protein modification; protein glycosylation. Glycosyltransferase forming with EXT1 the heterodimeric heparan sulfate polymerase which catalyzes the elongation of the heparan sulfate glycan backbone. Glycan backbone extension consists in the alternating transfer of (1-&gt;4)-beta-D-GlcA and (1-&gt;4)-alpha-D-GlcNAc residues from their respective UDP-sugar donors. Both EXT1 and EXT2 are required for the full activity of the polymerase since EXT1 bears the N-acetylglucosaminyl-proteoglycan 4-beta-glucuronosyltransferase activity within the complex while EXT2 carries the glucuronosyl-N-acetylglucosaminyl-proteoglycan 4-alpha-N-acetylglucosaminyltransferase activity. Heparan sulfate proteoglycans are ubiquitous components of the extracellular matrix and play an important role in tissue homeostasis and signaling. This Mus musculus (Mouse) protein is Exostosin-2.